A 157-amino-acid polypeptide reads, in one-letter code: Chromophore lyase CpcS/CpeS 1 (157 aa).

This sequence belongs to the CpcS/CpeS biliprotein lyase family.

The protein localises to the plastid. It localises to the organellar chromatophore. Its function is as follows. Covalently attaches a chromophore to Cys residue(s) of phycobiliproteins. This is Chromophore lyase CpcS/CpeS 1 from Paulinella chromatophora.